Reading from the N-terminus, the 264-residue chain is 3-methyl-2-oxobutanoate hydroxymethyltransferase (264 aa).

2 residues coordinate Mg(2+): Asp45 and Asp84. Residues 45–46, Asp84, and Lys112 each bind 3-methyl-2-oxobutanoate; that span reads DS. Residue Glu114 coordinates Mg(2+). Glu181 (proton acceptor) is an active-site residue.

It belongs to the PanB family. Homodecamer; pentamer of dimers. Mg(2+) serves as cofactor.

The protein localises to the cytoplasm. The enzyme catalyses 3-methyl-2-oxobutanoate + (6R)-5,10-methylene-5,6,7,8-tetrahydrofolate + H2O = 2-dehydropantoate + (6S)-5,6,7,8-tetrahydrofolate. Its pathway is cofactor biosynthesis; (R)-pantothenate biosynthesis; (R)-pantoate from 3-methyl-2-oxobutanoate: step 1/2. Catalyzes the reversible reaction in which hydroxymethyl group from 5,10-methylenetetrahydrofolate is transferred onto alpha-ketoisovalerate to form ketopantoate. The protein is 3-methyl-2-oxobutanoate hydroxymethyltransferase of Photobacterium profundum (strain SS9).